The sequence spans 147 residues: Large ribosomal subunit protein uL15 (147 aa).

A disordered region spans residues 1-46; the sequence is MSIRLENLSYTPGARKEKHRKGRGHAAGKGKQAGRGQSGQKKRSTV. Positions 16 to 28 are enriched in basic residues; sequence KEKHRKGRGHAAG.

It belongs to the universal ribosomal protein uL15 family. Part of the 50S ribosomal subunit.

Its function is as follows. Binds to the 23S rRNA. The polypeptide is Large ribosomal subunit protein uL15 (Mesomycoplasma hyopneumoniae (strain 7448) (Mycoplasma hyopneumoniae)).